Reading from the N-terminus, the 296-residue chain is 33 kDa chaperonin (296 aa).

2 disulfide bridges follow: cysteine 236/cysteine 238 and cysteine 269/cysteine 272.

This sequence belongs to the HSP33 family. Post-translationally, under oxidizing conditions two disulfide bonds are formed involving the reactive cysteines. Under reducing conditions zinc is bound to the reactive cysteines and the protein is inactive.

The protein resides in the cytoplasm. Its function is as follows. Redox regulated molecular chaperone. Protects both thermally unfolding and oxidatively damaged proteins from irreversible aggregation. Plays an important role in the bacterial defense system toward oxidative stress. In Lactobacillus acidophilus (strain ATCC 700396 / NCK56 / N2 / NCFM), this protein is 33 kDa chaperonin.